We begin with the raw amino-acid sequence, 289 residues long: MSRLSHQDLRRGFRELIASNSCYHTASVFDPMSARIAADLGFEVGILGGSVASLQVLAAPDFALITLSEFAEQATRIGRVAQLPVIADADHGYGNALNVMRTVVELERAGIAALTIEDTLLPAQFGRKSTDLISVAEGVGKIRAALEARVDPELAIIARTNAGILPVQEIISRTQQYERAGADAICMVGIRDFEQLEQISEHLSVPLMLVTYGNPALRDDARLAELGVKIAVDGHAAYFAAIKATYDCLREQRQIFTQASDLSATELAHTYTQPEEYIVWAKEFMSVKE.

Ser-50 contributes to the substrate binding site. Position 88 (Asp-88) interacts with Mg(2+). Positions 159 and 235 each coordinate substrate.

The protein belongs to the isocitrate lyase/PEP mutase superfamily. Oxaloacetate decarboxylase family. As to quaternary structure, homotetramer; dimer of dimers. The cofactor is Mg(2+).

The catalysed reaction is oxaloacetate + H(+) = pyruvate + CO2. Catalyzes the decarboxylation of oxaloacetate into pyruvate. Seems to play a role in maintaining cellular concentrations of bicarbonate and pyruvate. The polypeptide is Oxaloacetate decarboxylase (Pseudomonas fluorescens (strain ATCC BAA-477 / NRRL B-23932 / Pf-5)).